The sequence spans 491 residues: ADP-specific phosphofructokinase (491 aa).

The region spanning 4–486 is the ADPK domain; sequence EEWEQRHAEA…FVAMLAKIKQ (483 aa). Mg(2+) is bound by residues glutamate 281, glutamate 312, and aspartate 470. The active-site Proton acceptor is aspartate 470.

This sequence belongs to the carbohydrate kinase PfkC family. It depends on Mg(2+) as a cofactor.

It is found in the cytoplasm. The catalysed reaction is beta-D-fructose 6-phosphate + ADP = beta-D-fructose 1,6-bisphosphate + AMP + H(+). It functions in the pathway carbohydrate degradation; glycolysis. Catalyzes the phosphorylation of fructose 6-phosphate to fructose 1,6-bisphosphate using ADP as the phosphate donor. In Methanosarcina acetivorans (strain ATCC 35395 / DSM 2834 / JCM 12185 / C2A), this protein is ADP-specific phosphofructokinase.